The sequence spans 733 residues: Ribosomal protein S6 kinase alpha-2 (733 aa).

Positions F59 to F318 constitute a Protein kinase 1 domain. ATP-binding positions include L65 to V73 and K91. The Proton acceptor role is filled by D184. S218 carries the post-translational modification Phosphoserine; by PDPK1. The AGC-kinase C-terminal domain occupies V319–S388. S377 is modified (phosphoserine). Positions Y415–V672 constitute a Protein kinase 2 domain. ATP is bound by residues I421–C429 and K444. The active-site Proton acceptor is the D532.

This sequence belongs to the protein kinase superfamily. AGC Ser/Thr protein kinase family. S6 kinase subfamily. Forms a complex with either MAPK1/ERK2 or MAPK3/ERK1 in quiescent cells. Transiently dissociates following mitogenic stimulation. Interacts with FBXO5; cooperate to induce the metaphase arrest of early blastomeres; increases and stabilizes interaction of FBXO5 with CDC20. Mg(2+) serves as cofactor. Post-translationally, activated by phosphorylation at Ser-218 by PDPK1. Autophosphorylated on Ser-377, as part of the activation process. May be phosphorylated at Thr-356 and Ser-360 by MAPK1/ERK2 and MAPK3/ERK1. N-terminal myristoylation results in an activated kinase in the absence of added growth factors. As to expression, widely expressed with higher expression in lung, skeletal muscle, brain, uterus, ovary, thyroid and prostate.

Its subcellular location is the nucleus. The protein localises to the cytoplasm. The catalysed reaction is L-seryl-[protein] + ATP = O-phospho-L-seryl-[protein] + ADP + H(+). It carries out the reaction L-threonyl-[protein] + ATP = O-phospho-L-threonyl-[protein] + ADP + H(+). Upon extracellular signal or mitogen stimulation, phosphorylated at Thr-570 in the C-terminal kinase domain (CTKD) by MAPK1/ERK2 and MAPK3/ERK1. The activated CTKD then autophosphorylates Ser-377, allowing binding of PDPK1, which in turn phosphorylates Ser-218 in the N-terminal kinase domain (NTDK) leading to the full activation of the protein and subsequent phosphorylation of the substrates by the NTKD. Serine/threonine-protein kinase that acts downstream of ERK (MAPK1/ERK2 and MAPK3/ERK1) signaling and mediates mitogenic and stress-induced activation of transcription factors, regulates translation, and mediates cellular proliferation, survival, and differentiation. May function as tumor suppressor in epithelial ovarian cancer cells. The chain is Ribosomal protein S6 kinase alpha-2 (RPS6KA2) from Homo sapiens (Human).